Here is a 164-residue protein sequence, read N- to C-terminus: uncharacterized protein (164 aa).

This is an uncharacterized protein from Acanthamoeba polyphaga (Amoeba).